The sequence spans 241 residues: Eukaryotic translation initiation factor 3 subunit J (241 aa).

A disordered region spans residues 1–94 (MDVSWDADNF…EKTAEEMTPE (94 aa)). Positions 26–45 (GEDEDDNVKESWEDEEEEKK) are enriched in acidic residues. The stretch at 61–118 (KKKIHDKIAERERQEREKAERLVTEKTAEEMTPEQKLAEKLRQQKLQEESDLRLAMET) forms a coiled coil. Basic and acidic residues predominate over residues 66-89 (DKIAERERQEREKAERLVTEKTAE).

The protein belongs to the eIF-3 subunit J family. Component of the eukaryotic translation initiation factor 3 (eIF-3) complex.

It localises to the cytoplasm. Functionally, component of the eukaryotic translation initiation factor 3 (eIF-3) complex, which is involved in protein synthesis of a specialized repertoire of mRNAs and, together with other initiation factors, stimulates binding of mRNA and methionyl-tRNAi to the 40S ribosome. The eIF-3 complex specifically targets and initiates translation of a subset of mRNAs involved in cell proliferation. The protein is Eukaryotic translation initiation factor 3 subunit J of Bombyx mori (Silk moth).